The sequence spans 159 residues: Ribosomal RNA large subunit methyltransferase H (159 aa).

Residues isoleucine 76, glycine 108, and 127 to 132 contribute to the S-adenosyl-L-methionine site; that span reads FSKMTF.

It belongs to the RNA methyltransferase RlmH family. Homodimer.

Its subcellular location is the cytoplasm. The catalysed reaction is pseudouridine(1915) in 23S rRNA + S-adenosyl-L-methionine = N(3)-methylpseudouridine(1915) in 23S rRNA + S-adenosyl-L-homocysteine + H(+). Its function is as follows. Specifically methylates the pseudouridine at position 1915 (m3Psi1915) in 23S rRNA. The polypeptide is Ribosomal RNA large subunit methyltransferase H (Clostridium botulinum (strain Loch Maree / Type A3)).